Here is a 487-residue protein sequence, read N- to C-terminus: N-succinylglutamate 5-semialdehyde dehydrogenase (487 aa).

Residue 221 to 226 participates in NAD(+) binding; that stretch reads GSSDTG. Catalysis depends on residues Glu244 and Cys278.

This sequence belongs to the aldehyde dehydrogenase family. AstD subfamily.

It carries out the reaction N-succinyl-L-glutamate 5-semialdehyde + NAD(+) + H2O = N-succinyl-L-glutamate + NADH + 2 H(+). Its pathway is amino-acid degradation; L-arginine degradation via AST pathway; L-glutamate and succinate from L-arginine: step 4/5. In terms of biological role, catalyzes the NAD-dependent reduction of succinylglutamate semialdehyde into succinylglutamate. The polypeptide is N-succinylglutamate 5-semialdehyde dehydrogenase (Burkholderia ambifaria (strain MC40-6)).